Consider the following 276-residue polypeptide: NAD-capped RNA hydrolase NudC (276 aa).

Arg82 provides a ligand contact to substrate. Residues Cys112 and Cys115 each coordinate Zn(2+). Residue Glu125 participates in substrate binding. Zn(2+)-binding residues include Cys130 and Cys133. Substrate is bound at residue Tyr138. The Nudix hydrolase domain occupies 139–262 (PRISPSMIVL…SIARYLIDVY (124 aa)). A divalent metal cation is bound by residues Ala172, Glu188, and Glu192. Positions 173 to 194 (GFAEPGESAEDCLIREVREEVQ) match the Nudix box motif. 206-213 (QCWPFPHS) is a binding site for substrate. Glu233 serves as a coordination point for a divalent metal cation. Ala255 contributes to the substrate binding site.

Belongs to the Nudix hydrolase family. NudC subfamily. As to quaternary structure, homodimer. The cofactor is Mg(2+). It depends on Mn(2+) as a cofactor. Zn(2+) is required as a cofactor.

The enzyme catalyses a 5'-end NAD(+)-phospho-ribonucleoside in mRNA + H2O = a 5'-end phospho-adenosine-phospho-ribonucleoside in mRNA + beta-nicotinamide D-ribonucleotide + 2 H(+). It carries out the reaction NAD(+) + H2O = beta-nicotinamide D-ribonucleotide + AMP + 2 H(+). The catalysed reaction is NADH + H2O = reduced beta-nicotinamide D-ribonucleotide + AMP + 2 H(+). In terms of biological role, mRNA decapping enzyme that specifically removes the nicotinamide adenine dinucleotide (NAD) cap from a subset of mRNAs by hydrolyzing the diphosphate linkage to produce nicotinamide mononucleotide (NMN) and 5' monophosphate mRNA. The NAD-cap is present at the 5'-end of some mRNAs and stabilizes RNA against 5'-processing. Has preference for mRNAs with a 5'-end purine. Catalyzes the hydrolysis of a broad range of dinucleotide pyrophosphates. This chain is NAD-capped RNA hydrolase NudC, found in Pseudomonas fluorescens (strain Pf0-1).